The following is a 400-amino-acid chain: Diphosphomevalonate decarboxylase (400 aa).

A2 carries the N-acetylalanine modification. Residues 23–26 (YWGK) and R78 each bind (R)-5-diphosphomevalonate. S96 carries the post-translational modification Phosphoserine. Residues 156–161 (SGSACR) and T212 each bind (R)-5-diphosphomevalonate.

This sequence belongs to the diphosphomevalonate decarboxylase family. Homodimer. Expressed in heart, skeletal muscle, lung, liver, brain, pancreas, kidney and placenta.

Its subcellular location is the cytoplasm. It catalyses the reaction (R)-5-diphosphomevalonate + ATP = isopentenyl diphosphate + ADP + phosphate + CO2. Its pathway is steroid biosynthesis; cholesterol biosynthesis. In terms of biological role, catalyzes the ATP dependent decarboxylation of (R)-5-diphosphomevalonate to form isopentenyl diphosphate (IPP). Functions in the mevalonate (MVA) pathway leading to isopentenyl diphosphate (IPP), a key precursor for the biosynthesis of isoprenoids and sterol synthesis. The sequence is that of Diphosphomevalonate decarboxylase (MVD) from Homo sapiens (Human).